Consider the following 723-residue polypeptide: Calpastatin (723 aa).

Disordered stretches follow at residues 1-402 (MNPT…PGRC) and 422-509 (STHS…LPPL). Basic residues predominate over residues 21-30 (PNKKRHKKQA). A Glycyl lysine isopeptide (Lys-Gly) (interchain with G-Cter in SUMO2) cross-link involves residue Lys32. The span at 46 to 84 (VVHEKKTQEVKPKEHTEPKSQPKHPSDTRSKHAPKEKAV) shows a compositional bias: basic and acidic residues. The residue at position 50 (Lys50) is an N6-acetyllysine. Low complexity-rich tracts occupy residues 85 to 94 (SKSSEQPPSE) and 113 to 125 (SAVPAVAAAASAE). Ser87 carries the post-translational modification Phosphoserine. Thr137 carries the post-translational modification Phosphothreonine. Over residues 157-173 (TALDDLIDTLGEPEETK) the composition is skewed to acidic residues. An Inhibitory domain 1 repeat occupies 171–224 (ETKEDTTTYTGPEVSDPMSSTYIEELGKREVTLPPKYRELLNKEEGIAGPPPDS). The segment covering 195-216 (ELGKREVTLPPKYRELLNKEEG) has biased composition (basic and acidic residues). A phosphoserine mark is found at Ser224 and Ser245. 2 stretches are compositionally biased toward basic and acidic residues: residues 249-263 (DAKKTEKEKSTEEAL) and 306-367 (PRPE…KPLS). An Inhibitory domain 2 repeat occupies 307–359 (RPELDPSSIKEVDEAKAKEEKVKKCGEDEERVPSEYRLKPATDKDGKPLLPEA). Residues Ser367, Ser369, and Ser376 each carry the phosphoserine modification. Positions 378-396 (DFDRSKCKEKQSKPTEKNR) are enriched in basic and acidic residues. Phosphoserine is present on Ser443. Residues 445–504 (GKKEADPEDGKPVEDKVKEKAKEEDREKLGEREETIPPDYRLEEAKDKDGKPLPPKEVKE) show a composition bias toward basic and acidic residues. The stretch at 449-502 (ADPEDGKPVEDKVKEKAKEEDREKLGEREETIPPDYRLEEAKDKDGKPLPPKEV) is one Inhibitory domain 3 repeat. Ser519 and Ser530 each carry phosphoserine. The tract at residues 547-723 (SQTPAPTTQA…KPKADGKSTS (177 aa)) is disordered. Residues 548-560 (QTPAPTTQAAGPP) are compositionally biased toward low complexity. Positions 562–571 (DSARDNKELD) are enriched in basic and acidic residues. Ser578 and Ser580 each carry phosphoserine. The Inhibitory domain 4 repeat unit spans residues 586–642 (PDPDEHKPVEDKVKEKAKAEHRDKLGERDDTIPPKYQHLLDDNKEGTPGKPKRSESP). Residues 586–643 (PDPDEHKPVEDKVKEKAKAEHRDKLGERDDTIPPKYQHLLDDNKEGTPGKPKRSESPR) show a composition bias toward basic and acidic residues. The span at 653 to 670 (NLQVPRTPLTPSQGTWTA) shows a compositional bias: polar residues. Over residues 672 to 690 (PQLQKPQQTQQRTKTRSLL) the composition is skewed to low complexity. Over residues 701 to 723 (KAKDSTKAKEETSKPKADGKSTS) the composition is skewed to basic and acidic residues.

Belongs to the protease inhibitor I27 (calpastatin) family.

Its function is as follows. Specific inhibition of calpain (calcium-dependent cysteine protease). Plays a key role in postmortem tenderization of meat and have been proposed to be involved in muscle protein degradation in living tissue. This is Calpastatin (CAST) from Ovis aries (Sheep).